The primary structure comprises 136 residues: Group 1 truncated hemoglobin GlbN (136 aa).

His81 serves as a coordination point for heme.

Belongs to the truncated hemoglobin family. Group I subfamily. Homodimer. It depends on heme as a cofactor.

Binds oxygen cooperatively with very high affinity because of a fast combination and a slow dissociation rate. The protein is Group 1 truncated hemoglobin GlbN (glbN) of Mycolicibacterium paratuberculosis (strain ATCC BAA-968 / K-10) (Mycobacterium paratuberculosis).